Consider the following 473-residue polypeptide: Sarcalumenin (473 aa).

An N-terminal signal peptide occupies residues 1–20; sequence MRALVLLGCLLASLLFSGQA. The Dynamin-type G domain occupies 90–331; the sequence is ITSKPMVLFL…IENRLENKIA (242 aa). The interval 100–107 is G1 motif; that stretch reads GPWSVGKS. The interval 128–129 is G2 motif; it reads EP. Positions 190–193 are G3 motif; that stretch reads DTPG. The interval 255–258 is G4 motif; sequence NKAD. A region of interest (G5 motif) is located at residue proline 278. Residues asparagine 281 and asparagine 389 are each glycosylated (N-linked (GlcNAc...) asparagine).

This sequence belongs to the TRAFAC class dynamin-like GTPase superfamily. Dynamin/Fzo/YdjA family. In terms of processing, N-glycosylated.

The protein localises to the sarcoplasmic reticulum lumen. It is found in the sarcoplasmic reticulum membrane. The chain is Sarcalumenin (SRL) from Homo sapiens (Human).